A 499-amino-acid chain; its full sequence is Ent-kaurenoic acid oxidase 1 (499 aa).

Residues 5–25 traverse the membrane as a helical segment; it reads AWWAVAAVVAALAVVALDAAV. Residue cysteine 443 participates in heme binding.

The protein belongs to the cytochrome P450 family. It depends on heme as a cofactor.

It is found in the endoplasmic reticulum membrane. The catalysed reaction is ent-kaur-16-en-19-oate + 3 reduced [NADPH--hemoprotein reductase] + 3 O2 = gibberellin A12 + 3 oxidized [NADPH--hemoprotein reductase] + 4 H2O + 4 H(+). It carries out the reaction ent-kaur-16-en-19-oate + reduced [NADPH--hemoprotein reductase] + O2 = ent-7alpha-hydroxykaur-16-en-19-oate + oxidized [NADPH--hemoprotein reductase] + H2O + H(+). The enzyme catalyses ent-7alpha-hydroxykaur-16-en-19-oate + reduced [NADPH--hemoprotein reductase] + O2 = gibberellin A12 aldehyde + oxidized [NADPH--hemoprotein reductase] + 2 H2O + H(+). It catalyses the reaction gibberellin A12 aldehyde + reduced [NADPH--hemoprotein reductase] + O2 = gibberellin A12 + oxidized [NADPH--hemoprotein reductase] + H2O + 2 H(+). It functions in the pathway plant hormone biosynthesis; gibberellin biosynthesis. In terms of biological role, catalyzes three successive oxidations of ent-kaurenoic acid giving gibberellin 12 (GA12), a key step in gibberellins (GAs) biosynthesis. GAs, which are involved many processes, including stem elongation, play a central role in plant development. The chain is Ent-kaurenoic acid oxidase 1 from Hordeum vulgare (Barley).